The sequence spans 359 residues: 3-dehydroquinate synthase (359 aa).

NAD(+) is bound by residues 69-74 (SGESSK), 103-107 (GVVGD), 127-128 (TT), Lys139, Lys148, and 166-169 (TLST). Glu181, His242, and His259 together coordinate Zn(2+).

The protein belongs to the sugar phosphate cyclases superfamily. Dehydroquinate synthase family. Requires NAD(+) as cofactor. Co(2+) is required as a cofactor. It depends on Zn(2+) as a cofactor.

The protein localises to the cytoplasm. The catalysed reaction is 7-phospho-2-dehydro-3-deoxy-D-arabino-heptonate = 3-dehydroquinate + phosphate. The protein operates within metabolic intermediate biosynthesis; chorismate biosynthesis; chorismate from D-erythrose 4-phosphate and phosphoenolpyruvate: step 2/7. Catalyzes the conversion of 3-deoxy-D-arabino-heptulosonate 7-phosphate (DAHP) to dehydroquinate (DHQ). This is 3-dehydroquinate synthase from Oceanobacillus iheyensis (strain DSM 14371 / CIP 107618 / JCM 11309 / KCTC 3954 / HTE831).